Reading from the N-terminus, the 173-residue chain is Microfibrillar-associated protein 5 (173 aa).

An N-terminal signal peptide occupies residues 1–21 (MSLLGPKVLLFLAAFIITSDW). A Cell attachment site motif is present at residues 30-32 (RGD). A glycan (O-linked (GalNAc...) threonine) is linked at Thr54. Residue Asn79 is glycosylated (N-linked (GlcNAc...) asparagine).

Belongs to the MFAP family. As to quaternary structure, interacts with TGFB2. Interacts with BMP2. Interacts with FBN1 (via N-terminal domain) and FBN2. Forms intermolecular disulfide bonds either with other MAGP-2 molecules or with other components of the microfibrils. In terms of processing, N- and O-glycosylated. O-glycosylated with core 1 or possibly core 8 glycans. O-glycan heterogeneity at Thr-54: HexHexNAc (major) and HexHexNAc + sulfate (minor).

The protein localises to the secreted. Its subcellular location is the extracellular space. It is found in the extracellular matrix. May play a role in hematopoiesis. In the cardiovascular system, could regulate growth factors or participate in cell signaling in maintaining large vessel integrity. Component of the elastin-associated microfibrils. This Homo sapiens (Human) protein is Microfibrillar-associated protein 5 (MFAP5).